Consider the following 211-residue polypeptide: Large ribosomal subunit protein uL3 (211 aa).

The interval 122–156 (NQKRNNFGRGPMSHGSKNHRAPGSIGAGTTPGRVY) is disordered.

The protein belongs to the universal ribosomal protein uL3 family. As to quaternary structure, part of the 50S ribosomal subunit. Forms a cluster with proteins L14 and L19.

One of the primary rRNA binding proteins, it binds directly near the 3'-end of the 23S rRNA, where it nucleates assembly of the 50S subunit. This Nostoc sp. (strain PCC 7120 / SAG 25.82 / UTEX 2576) protein is Large ribosomal subunit protein uL3.